The chain runs to 1219 residues: N-acetylglucosamine-1-phosphotransferase subunits alpha/beta (1219 aa).

Residues 27 to 47 (LCFGGLVLMIVSAFQFGEVVV) form a helical membrane-spanning segment. Asn88, Asn119, Asn153, Asn292, and Asn381 each carry an N-linked (GlcNAc...) asparagine glycan. 4 disulfide bridges follow: Cys443–Cys466, Cys457–Cys473, Cys508–Cys531, and Cys522–Cys538. 2 LNR repeats span residues 443 to 478 (CAEG…GSSR) and 508 to 538 (CNQG…VGDC). Asp454 is a Ca(2+) binding site. N-linked (GlcNAc...) asparagine glycosylation is present at Asn462. Ca(2+)-binding residues include Asp469, Asp472, Asp519, Asp534, and Asp537. N-linked (GlcNAc...) asparagine glycosylation is found at Asn554, Asn610, Asn617, Asn645, Asn696, Asn726, Asn823, and Asn974. The disordered stretch occupies residues 640–666 (ELPKSNTSTPVRDKEEEPKPTVATPEP). Positions 696 to 804 (NETLLPDEVK…DDVTTKAQSR (109 aa)) constitute a DMAP1-binding domain. Positions 970–1005 (VQQLNISEVFDEIDTDHSGVLSDREIRTLATRIHEL) constitute an EF-hand domain. Ca(2+) contacts are provided by Asp983, Asp985, Ser987, and Glu994. Residues Asn1021, Asn1029, and Asn1094 are each glycosylated (N-linked (GlcNAc...) asparagine). A helical membrane pass occupies residues 1180–1200 (VLVTLVVFTVMSFFAEQLVML).

It belongs to the stealth family. In terms of assembly, hexamer of two alpha, two beta and two gamma (GNPTG) subunits; disulfide-linked. The alpha and/or the beta subunits of the enzyme constitute the catalytic subunits. The alpha- and beta-subunits are generated by a proteolytic cleavage by mbtps1 protease at the Gln-893-Asp-894 bond.

It is found in the golgi apparatus membrane. It catalyses the reaction N(4)-[alpha-D-mannosyl-(1-&gt;2)-alpha-D-mannosyl-(glycan)]-L-asparaginyl-[protein] + UDP-N-acetyl-alpha-D-glucosamine = N(4)-[6-(N-acetyl-alpha-D-glucosaminyl-1-phospho)-alpha-D-mannosyl-(1-&gt;2)-alpha-D-mannosyl-(glycan)]-L-asparaginyl-[protein] + UMP + H(+). Catalyzes the formation of mannose 6-phosphate (M6P) markers on high mannose type oligosaccharides in the Golgi apparatus. M6P residues are required to bind to the M6P receptors (MPR), which mediate the vesicular transport of lysosomal enzymes to the endosomal/prelysosomal compartment. This chain is N-acetylglucosamine-1-phosphotransferase subunits alpha/beta (gnptab), found in Danio rerio (Zebrafish).